Consider the following 544-residue polypeptide: Serine/threonine-protein kinase bur1 (544 aa).

Positions 25 to 326 (FEFLGKLGEG…AIDALKHPYF (302 aa)) constitute a Protein kinase domain. ATP contacts are provided by residues 31–39 (LGEGTFGEV) and Lys-54. Asp-155 acts as the Proton acceptor in catalysis. Positions 357–544 (AAMPPAPAGG…ERVDRGPYRR (188 aa)) are disordered. Positions 374 to 403 (GGWSTNSGSRTGAETRNPRISSAARSQGNQ) are enriched in polar residues. 4 stretches are compositionally biased toward basic and acidic residues: residues 419 to 438 (RGNEELKDPNHSFSSRHRDG), 456 to 466 (HSDKTGRDRGY), 488 to 511 (DRNRDRDQGTAISDRRGSYYDKSH), and 532 to 544 (NYRERVDRGPYRR).

The protein belongs to the protein kinase superfamily. CMGC Ser/Thr protein kinase family. CDC2/CDKX subfamily.

It is found in the nucleus. It catalyses the reaction L-seryl-[protein] + ATP = O-phospho-L-seryl-[protein] + ADP + H(+). The enzyme catalyses L-threonyl-[protein] + ATP = O-phospho-L-threonyl-[protein] + ADP + H(+). The catalysed reaction is [DNA-directed RNA polymerase] + ATP = phospho-[DNA-directed RNA polymerase] + ADP + H(+). Serine/threonine-protein kinase involved in transcription regulation. Phosphorylates the UBC2/RAD6 ubiquitin-conjugating enzyme (E2), leading to monoubiquitination of histone H2B and the silencing of telomeric-associated genes. Also required for histone H3 methylation. Necessary for the recovery from pheromone-induced growth arrest in the cell cycle G1 phase. The chain is Serine/threonine-protein kinase bur1 (ptkA) from Emericella nidulans (strain FGSC A4 / ATCC 38163 / CBS 112.46 / NRRL 194 / M139) (Aspergillus nidulans).